The primary structure comprises 401 residues: 8-amino-7-oxononanoate synthase (401 aa).

R24 provides a ligand contact to substrate. Residue 111 to 112 (GF) participates in pyridoxal 5'-phosphate binding. H137 contacts substrate. Residues S183, H211, and T240 each coordinate pyridoxal 5'-phosphate. K243 carries the N6-(pyridoxal phosphate)lysine modification. T357 provides a ligand contact to substrate.

Belongs to the class-II pyridoxal-phosphate-dependent aminotransferase family. BioF subfamily. As to quaternary structure, homodimer. Pyridoxal 5'-phosphate is required as a cofactor.

It catalyses the reaction 6-carboxyhexanoyl-[ACP] + L-alanine + H(+) = (8S)-8-amino-7-oxononanoate + holo-[ACP] + CO2. It participates in cofactor biosynthesis; biotin biosynthesis. Functionally, catalyzes the decarboxylative condensation of pimeloyl-[acyl-carrier protein] and L-alanine to produce 8-amino-7-oxononanoate (AON), [acyl-carrier protein], and carbon dioxide. The protein is 8-amino-7-oxononanoate synthase of Xylella fastidiosa (strain M12).